The sequence spans 381 residues: Cytochrome P450 105C1 (381 aa).

Cys330 provides a ligand contact to heme.

Belongs to the cytochrome P450 family. It depends on heme as a cofactor.

The protein resides in the cytoplasm. The polypeptide is Cytochrome P450 105C1 (cyp105C1) (Streptomyces sp).